Reading from the N-terminus, the 664-residue chain is Putative peroxisomal acyl-coenzyme A oxidase 1.2 (664 aa).

FAD is bound at residue 399–404; sequence CGGHGY. The Microbody targeting signal motif lies at 662–664; the sequence is AKL.

This sequence belongs to the acyl-CoA oxidase family. FAD is required as a cofactor.

The protein resides in the peroxisome. The enzyme catalyses a 2,3-saturated acyl-CoA + O2 = a (2E)-enoyl-CoA + H2O2. Functionally, catalyzes the desaturation of acyl-CoAs to 2-trans-enoyl-CoAs. The sequence is that of Putative peroxisomal acyl-coenzyme A oxidase 1.2 (ACX1.2) from Arabidopsis thaliana (Mouse-ear cress).